The chain runs to 1053 residues: MLAVSLRDHGFPSATVQIRPAFCVQSDVVGSGNPPRMNYCQNARTAMSAALQSSDDAFRTVSSPLATDLDLSSPLEFFLRHRLTVVEELWEVVLRQECGQELVDILTQLRDLTSPEGQAPEVGGEALVQVIETLELSDAIRAARAFALYFQLINIVEQHYEQTQYQLAYERSRLEPLPGPDESPEGLHTIEIPQHQLDPFAAVIPLNQDPATFQTLFPRLRQLNVPPQMIQELTDRLDIRLVFTAHPTEIVRHTIRDKQRRIAYLLRQLDELETGKNRGFRELEAQNIRQQLTEEIRLWWRTDELHQFKPTVLDEVDYALHYFQEVLFEAIPLLYQRFRLALQGTFPDLQPPRYNFCQFGSWVGSDRDGNPSVTSAVTWQTACYQRSLVLDRYITAVEHLRNVLSLSMHWSEVLPELLSSLEQESMLFPETYEQLAVRYRQEPYRLKLSYILERLHNTRDRNTRLQQQQEKDPTTPLPEYRDGTLYQAGTAFLEDLKLIQHNLKQTGLSCYELEKLICQVEIFGFNLVHLDIRQESSRHSDAINEICEYLQILPQPYNELSEAERTAWLVQELKTRRPLVPARMPFSESTREIIETLRMVKQLQEEFGEAACQTYIISMSRELSDLLEVLLLAKEVGLYDPVTGKSSLQVIPLFETVEDLQNAPRVMTALFELPFYTQLNPTQSEPLQEVMLGYSDSNKDSGFLSSNWEIHKAQKALGTVARDHRVKLRIFHGRGGSVGRGGGPAYEAILAQPGRTTDGRIKITEQGEVLASKYALPELALYNLETITTAVIQSSLLGSGFDDIEPWNQIMEELAARSRRHYRALVYEQPDLVDFFNQVTPIEEISKLQISSRPARRKTGKRDLGSLRAIPWVFSWTQSRFLLPSWYGVGTALQEFLQERPEQNLNLLRYFYEKWPFFRMVISKVEMTLAKVDLQIAHHYVHELANPEDQERFERVFSQIAAEFQLTCHLVLTITNHGRLLDGDPELQRSVQLRNGTIVPLGFLQVALLKRLRQYRQQTETTGLMRSRYSKGELLRGALLTINGIAAGMRNTG.

H246 is a catalytic residue. Residues 461–473 (RNTRLQQQQEKDP) show a composition bias toward basic and acidic residues. The disordered stretch occupies residues 461–480 (RNTRLQQQQEKDPTTPLPEY). K699 is an active-site residue.

This sequence belongs to the PEPCase type 1 family. Mg(2+) serves as cofactor.

It catalyses the reaction oxaloacetate + phosphate = phosphoenolpyruvate + hydrogencarbonate. Its function is as follows. Forms oxaloacetate, a four-carbon dicarboxylic acid source for the tricarboxylic acid cycle. The chain is Phosphoenolpyruvate carboxylase (ppc) from Synechococcus sp. (strain ATCC 27144 / PCC 6301 / SAUG 1402/1) (Anacystis nidulans).